The sequence spans 675 residues: Protein C-mannosyl-transferase DPY19L1 (675 aa).

The tract at residues 1-22 (MEGRPPPEGRPPPRPRTGRAPR) is disordered. 11 helical membrane passes run 66-88 (LYYS…WMIM), 156-176 (ACFY…LFFI), 186-208 (LGGL…VMWT), 236-254 (LYRG…FMLP), 260-279 (FVLL…GYID), 286-303 (IIYI…LMFG), 309-325 (TSYY…ILAM), 334-354 (VSEL…TVIL), 414-434 (VVLV…WGVL), 449-469 (GELV…ILIM), and 491-511 (LFGW…ILAA).

Belongs to the dpy-19 family. As to expression, widely expressed.

It is found in the endoplasmic reticulum membrane. The catalysed reaction is L-tryptophyl-[protein] + a di-trans,poly-cis-dolichyl beta-D-mannosyl phosphate = C-alpha-D-mannosyl-L-tryptophyl-[protein] + a di-trans,poly-cis-dolichyl phosphate + H(+). Its pathway is protein modification; protein glycosylation. In terms of biological role, C-mannosyltransferase that mediates the C-mannosylation tryptophan residues on target proteins. The reaction occurs on the luminal side of the endoplasmic reticulum and involves the transfer of a mannose unit from a dolichylphosphate mannose (Dol-P-Man) donor to an acceptor protein containing a WxxW consensus sequence. C-mannosylates the first two tryptophans in the WxxWxxWxxC motif in thrombospondin (TSP) type-1 of UNC5A. Regulates neurite extension during development. In Homo sapiens (Human), this protein is Protein C-mannosyl-transferase DPY19L1 (DPY19L1).